Here is a 47-residue protein sequence, read N- to C-terminus: Large ribosomal subunit protein bL34 (47 aa).

It belongs to the bacterial ribosomal protein bL34 family.

The polypeptide is Large ribosomal subunit protein bL34 (rpmH) (Mycolicibacterium smegmatis (strain ATCC 700084 / mc(2)155) (Mycobacterium smegmatis)).